The primary structure comprises 306 residues: Ribosomal RNA small subunit methyltransferase H (306 aa).

S-adenosyl-L-methionine contacts are provided by residues 33-35 (GGY), Asp-51, Phe-78, Asp-96, and Gln-103.

This sequence belongs to the methyltransferase superfamily. RsmH family.

It localises to the cytoplasm. The catalysed reaction is cytidine(1402) in 16S rRNA + S-adenosyl-L-methionine = N(4)-methylcytidine(1402) in 16S rRNA + S-adenosyl-L-homocysteine + H(+). In terms of biological role, specifically methylates the N4 position of cytidine in position 1402 (C1402) of 16S rRNA. This is Ribosomal RNA small subunit methyltransferase H from Rickettsia prowazekii (strain Madrid E).